The sequence spans 250 residues: Biosynthetic peptidoglycan transglycosylase (250 aa).

A helical transmembrane segment spans residues 15-35 (AVLLFFVSSLGFVLLYRFVPV).

Belongs to the glycosyltransferase 51 family.

It localises to the cell inner membrane. It carries out the reaction [GlcNAc-(1-&gt;4)-Mur2Ac(oyl-L-Ala-gamma-D-Glu-L-Lys-D-Ala-D-Ala)](n)-di-trans,octa-cis-undecaprenyl diphosphate + beta-D-GlcNAc-(1-&gt;4)-Mur2Ac(oyl-L-Ala-gamma-D-Glu-L-Lys-D-Ala-D-Ala)-di-trans,octa-cis-undecaprenyl diphosphate = [GlcNAc-(1-&gt;4)-Mur2Ac(oyl-L-Ala-gamma-D-Glu-L-Lys-D-Ala-D-Ala)](n+1)-di-trans,octa-cis-undecaprenyl diphosphate + di-trans,octa-cis-undecaprenyl diphosphate + H(+). Its pathway is cell wall biogenesis; peptidoglycan biosynthesis. Its function is as follows. Peptidoglycan polymerase that catalyzes glycan chain elongation from lipid-linked precursors. The polypeptide is Biosynthetic peptidoglycan transglycosylase (Bdellovibrio bacteriovorus (strain ATCC 15356 / DSM 50701 / NCIMB 9529 / HD100)).